The chain runs to 698 residues: Polyribonucleotide nucleotidyltransferase (698 aa).

Residues D487 and D493 each contribute to the Mg(2+) site. One can recognise a KH domain in the interval 555 to 614; sequence PKIIQIQIDPQKIGDVVGQRGKTINAIIEQTGVKIDINDEGAVSVCGTDKDMMDKAINMI. Residues 624 to 692 form the S1 motif domain; that stretch reads GQVFEGKVIS…KMGRISFSIK (69 aa).

This sequence belongs to the polyribonucleotide nucleotidyltransferase family. Mg(2+) is required as a cofactor.

Its subcellular location is the cytoplasm. It carries out the reaction RNA(n+1) + phosphate = RNA(n) + a ribonucleoside 5'-diphosphate. Involved in mRNA degradation. Catalyzes the phosphorolysis of single-stranded polyribonucleotides processively in the 3'- to 5'-direction. The sequence is that of Polyribonucleotide nucleotidyltransferase from Lachnoclostridium phytofermentans (strain ATCC 700394 / DSM 18823 / ISDg) (Clostridium phytofermentans).